A 275-amino-acid chain; its full sequence is Large ribosomal subunit protein uL2c (275 aa).

A disordered region spans residues 223-255 (VVMNPVDHPHGGGEGRAPIGRSRPVTPWGRPAL).

It belongs to the universal ribosomal protein uL2 family. In terms of assembly, part of the 50S ribosomal subunit.

It is found in the plastid. Its subcellular location is the chloroplast. In Pleurastrum terricola (Filamentous green alga), this protein is Large ribosomal subunit protein uL2c (rpl2).